Here is a 432-residue protein sequence, read N- to C-terminus: Adenylosuccinate synthetase (432 aa).

GTP contacts are provided by residues 13–19 and 41–43; these read GDEGKGK and GHT. Aspartate 14 (proton acceptor) is an active-site residue. Residues aspartate 14 and glycine 41 each contribute to the Mg(2+) site. Residues 14–17, 39–42, threonine 130, arginine 144, glutamine 225, threonine 240, and arginine 304 each bind IMP; these read DEGK and NAGH. Histidine 42 (proton donor) is an active-site residue. Residue 300–306 coordinates substrate; sequence ATTGRRR. GTP contacts are provided by residues arginine 306, 332–334, and 415–417; these read KLD and STG.

Belongs to the adenylosuccinate synthetase family. Homodimer. Mg(2+) is required as a cofactor.

It localises to the cytoplasm. It catalyses the reaction IMP + L-aspartate + GTP = N(6)-(1,2-dicarboxyethyl)-AMP + GDP + phosphate + 2 H(+). Its pathway is purine metabolism; AMP biosynthesis via de novo pathway; AMP from IMP: step 1/2. Functionally, plays an important role in the de novo pathway of purine nucleotide biosynthesis. Catalyzes the first committed step in the biosynthesis of AMP from IMP. The protein is Adenylosuccinate synthetase of Sodalis glossinidius (strain morsitans).